A 506-amino-acid chain; its full sequence is MLPKVLLMLLNMFLALQWRVGPHIKLENKPPAQDKVVFGPQPQPSGKKLPARETELTADHTTERPRGKLTRASQILNTILSNYDHKLRPSIGEKPTVVTVKVFVNSLGPISILDMEYSIDIIFYQTWYDERLRYNDTFETLILHGNVVSQLWIPDTFFRNSKRTQEYDITIPNQMALIHKDGKVLYTVRMTIDARCSLHMLNFPMDSHSCPLSFSSFSYDEHEMIYKWENFKLKIDAKNTWKLLEFDFTGVNNKTEIISTPVGDFMVMTFFFNVSRRFGFIVFQNYIPSSVTTMLSWVSFWIKIEAAAARASVGVSSVLTMATLGTFSRKNFPRVSYLTALDFYIAICFVLCFCTLLEFTVLNFLTYNNIERQASPKFYQFPTNSRANARTRARARTRARARARARQQQEVFVCEIVTYEENAEEGYQWSPRSRRPQCPWRRCGRSYVCFRVLRKYFCMVPGCEGNNWQRGRICIHVYRLDNYSRVLFPITFFFFNVVYWVICLNL.

Residues 1-17 (MLPKVLLMLLNMFLALQ) form the signal peptide. Residues 18-277 (WRVGPHIKLE…MTFFFNVSRR (260 aa)) lie on the Extracellular side of the membrane. The interval 32-65 (AQDKVVFGPQPQPSGKKLPARETELTADHTTERP) is disordered. The segment covering 50-65 (PARETELTADHTTERP) has biased composition (basic and acidic residues). An N-linked (GlcNAc...) asparagine glycan is attached at Asn-135. Cysteines 196 and 210 form a disulfide. The N-linked (GlcNAc...) asparagine glycan is linked to Asn-253. A helical transmembrane segment spans residues 278 to 298 (FGFIVFQNYIPSSVTTMLSWV). The Cytoplasmic portion of the chain corresponds to 299–308 (SFWIKIEAAA). A helical membrane pass occupies residues 309-328 (ARASVGVSSVLTMATLGTFS). The Extracellular segment spans residues 329–344 (RKNFPRVSYLTALDFY). Residues 345 to 365 (IAICFVLCFCTLLEFTVLNFL) traverse the membrane as a helical segment. At 366-485 (TYNNIERQAS…HVYRLDNYSR (120 aa)) the chain is on the cytoplasmic side. A helical membrane pass occupies residues 486-506 (VLFPITFFFFNVVYWVICLNL).

Belongs to the ligand-gated ion channel (TC 1.A.9) family. Gamma-aminobutyric acid receptor (TC 1.A.9.5) subfamily. GABRE sub-subfamily. In terms of assembly, heteropentamer, formed by a combination of alpha (GABRA1-6), beta (GABRB1-3), gamma (GABRG1-3), delta (GABRD), epsilon (GABRE), rho (GABRR1-3), pi (GABRP) and theta (GABRQ) chains, each subunit exhibiting distinct physiological and pharmacological properties. Expressed in brain and heart. Strongly expressed in locus ceruleus from the first postnatal day. Weakly expressed in other brainstem nuclei and in the hypothalamus. Found in the cerebral cortex of pups.

It localises to the cell membrane. It is found in the postsynaptic cell membrane. It catalyses the reaction chloride(in) = chloride(out). Its function is as follows. Epsilon subunit of the heteropentameric ligand-gated chloride channel gated by gamma-aminobutyric acid (GABA), a major inhibitory neurotransmitter in the brain. GABA-gated chloride channels, also named GABA(A) receptors (GABAAR), consist of five subunits arranged around a central pore and contain GABA active binding site(s) located at the alpha and beta subunit interfaces. When activated by GABA, GABAARs selectively allow the flow of chloride anions across the cell membrane down their electrochemical gradient. GABARs containing epsilon subunit may also permit spontaneous chloride channel activity while preserving the structural information required for GABA-gated openings. GABARs containing epsilon subunit may regulate cardiac function. In Rattus norvegicus (Rat), this protein is Gamma-aminobutyric acid receptor subunit epsilon.